The primary structure comprises 191 residues: Holliday junction branch migration complex subunit RuvA (191 aa).

Positions 1–64 (MIGSITGNVE…DNITQLYGFL (64 aa)) are domain I. The domain II stretch occupies residues 65–142 (NRQEQDYFKM…KMPIEETFSI (78 aa)). Positions 143 to 146 (IEND) are flexible linker. The segment at 146–191 (DDSLAALISLGYEKLKAFNVIQEIKSKTPDASTQEVIRKALQKLSQ) is domain III.

This sequence belongs to the RuvA family. Homotetramer. Forms an RuvA(8)-RuvB(12)-Holliday junction (HJ) complex. HJ DNA is sandwiched between 2 RuvA tetramers; dsDNA enters through RuvA and exits via RuvB. An RuvB hexamer assembles on each DNA strand where it exits the tetramer. Each RuvB hexamer is contacted by two RuvA subunits (via domain III) on 2 adjacent RuvB subunits; this complex drives branch migration. In the full resolvosome a probable DNA-RuvA(4)-RuvB(12)-RuvC(2) complex forms which resolves the HJ.

It localises to the cytoplasm. Its function is as follows. The RuvA-RuvB-RuvC complex processes Holliday junction (HJ) DNA during genetic recombination and DNA repair, while the RuvA-RuvB complex plays an important role in the rescue of blocked DNA replication forks via replication fork reversal (RFR). RuvA specifically binds to HJ cruciform DNA, conferring on it an open structure. The RuvB hexamer acts as an ATP-dependent pump, pulling dsDNA into and through the RuvAB complex. HJ branch migration allows RuvC to scan DNA until it finds its consensus sequence, where it cleaves and resolves the cruciform DNA. In Ehrlichia ruminantium (strain Gardel), this protein is Holliday junction branch migration complex subunit RuvA.